We begin with the raw amino-acid sequence, 376 residues long: Zinc-regulated transporter 1 (376 aa).

Topologically, residues 1–50 (MSNVTTPWWKQWDPSEVTLADKTPDDVWKTCVLQGVYFGGNEYNGNLGAR) are extracellular. The chain crosses the membrane as a helical span at residues 51–71 (ISSVFVILFVSTFFTMFPLIS). The Cytoplasmic segment spans residues 72–80 (TKVKRLRIP). The helical transmembrane segment at 81–101 (LYVYLFAKYFGSGVIVATAFI) threads the bilayer. The Extracellular segment spans residues 102–122 (HLMDPAYGAIGGTTCVGQTGN). The chain crosses the membrane as a helical span at residues 123 to 143 (WGLYSWCPAIMLTSLTFTFLT). The Cytoplasmic portion of the chain corresponds to 144–216 (DLFSSVWVER…TSMDVVQSFQ (73 aa)). Residues 177–191 (VSSENDNENGTANGS) show a composition bias toward polar residues. A disordered region spans residues 177 to 196 (VSSENDNENGTANGSHDTKN). A helical membrane pass occupies residues 217-237 (AQFYAFLILEFGVIFHSVMIG). The Extracellular portion of the chain corresponds to 238-242 (LNLGS). The chain crosses the membrane as a helical span at residues 243-263 (VGDEFSSLYPVLVFHQSFEGL). The Cytoplasmic segment spans residues 264–278 (GIGARLSAIEFPRSK). A helical membrane pass occupies residues 279 to 299 (RWWPWALCVAYGLTTPICVAI). The Extracellular portion of the chain corresponds to 300-310 (GLGVRTRYVSG). The chain crosses the membrane as a helical span at residues 311–331 (SYTALVISGVLDAISAGILLY). The Cytoplasmic segment spans residues 332-354 (TGLVELLARDFIFNPQRTKDLRE). A helical membrane pass occupies residues 355–375 (LSFNVICTLFGAGIMALIGKW). A topological domain (extracellular) is located at residue A376.

It belongs to the ZIP transporter (TC 2.A.5) family.

The protein resides in the membrane. High-affinity zinc transport protein. The protein is Zinc-regulated transporter 1 (ZRT1) of Saccharomyces cerevisiae (strain ATCC 204508 / S288c) (Baker's yeast).